The primary structure comprises 487 residues: Rhoptry apical surface protein 1 (487 aa).

The tract at residues 337–487 is disordered; it reads EVAMSGRGGH…EEEQPLLFTQ (151 aa). 2 stretches are compositionally biased toward basic and acidic residues: residues 385 to 399 and 454 to 475; these read DGIR…DRRA and EKNE…GVEY.

Interacts with RASP2.

The protein resides in the cytoplasmic vesicle. It localises to the secretory vesicle. Its subcellular location is the rhoptry membrane. The chain is Rhoptry apical surface protein 1 from Toxoplasma gondii (strain ATCC 50853 / GT1).